A 185-amino-acid polypeptide reads, in one-letter code: Elongation factor P (185 aa).

Belongs to the elongation factor P family.

It localises to the cytoplasm. It participates in protein biosynthesis; polypeptide chain elongation. Involved in peptide bond synthesis. Stimulates efficient translation and peptide-bond synthesis on native or reconstituted 70S ribosomes in vitro. Probably functions indirectly by altering the affinity of the ribosome for aminoacyl-tRNA, thus increasing their reactivity as acceptors for peptidyl transferase. This is Elongation factor P from Paraburkholderia phytofirmans (strain DSM 17436 / LMG 22146 / PsJN) (Burkholderia phytofirmans).